The following is a 211-amino-acid chain: Endo-1,4-beta-xylanase A (211 aa).

The signal sequence occupies residues 1-27 (MKVTAAFAGLLVTAFAAPVPEPVLVSR). Residues 28 to 210 (SAGINYVQNY…GAGSASVTIS (183 aa)) form the GH11 domain. Glu-106 functions as the Nucleophile in the catalytic mechanism. A disulfide bridge connects residues Cys-119 and Cys-138. Glu-197 serves as the catalytic Proton donor.

This sequence belongs to the glycosyl hydrolase 11 (cellulase G) family.

It localises to the secreted. The enzyme catalyses Endohydrolysis of (1-&gt;4)-beta-D-xylosidic linkages in xylans.. It participates in glycan degradation; xylan degradation. Functionally, endo-1,4-beta-xylanase involved in the hydrolysis of xylan, a major structural heterogeneous polysaccharide found in plant biomass representing the second most abundant polysaccharide in the biosphere, after cellulose. The protein is Endo-1,4-beta-xylanase A (xynA) of Aspergillus niger.